A 63-amino-acid chain; its full sequence is Bowman-birk type proteinase inhibitor 2 (63 aa).

7 disulfide bridges follow: cysteine 7–cysteine 61, cysteine 8–cysteine 23, cysteine 11–cysteine 57, cysteine 13–cysteine 21, cysteine 31–cysteine 38, cysteine 35–cysteine 50, and cysteine 40–cysteine 48.

The protein belongs to the Bowman-Birk serine protease inhibitor family. In terms of assembly, exists as a dimer in its native form.

Functionally, inhibits trypsin, chymotrypsin, plasmin and factor XIIa. Does not inhibit factor Xa, thrombin, human plasma kallikrein, porcine pancreatic kallikrein and human urinary kallikrein. This Amburana cearensis (Cerejeira) protein is Bowman-birk type proteinase inhibitor 2.